Reading from the N-terminus, the 686-residue chain is Methionine--tRNA ligase (686 aa).

The short motif at 15 to 25 (PYANGSIHLGH) is the 'HIGH' region element. Positions 146, 149, 159, and 162 each coordinate Zn(2+). Positions 332–336 (KMSKS) match the 'KMSKS' region motif. Lys-335 serves as a coordination point for ATP. Residues 585–686 (AFEAVDMRIA…EGAQPGMRVM (102 aa)) form the tRNA-binding domain.

This sequence belongs to the class-I aminoacyl-tRNA synthetase family. MetG type 1 subfamily. As to quaternary structure, homodimer. Zn(2+) serves as cofactor.

It localises to the cytoplasm. The catalysed reaction is tRNA(Met) + L-methionine + ATP = L-methionyl-tRNA(Met) + AMP + diphosphate. Its function is as follows. Is required not only for elongation of protein synthesis but also for the initiation of all mRNA translation through initiator tRNA(fMet) aminoacylation. The polypeptide is Methionine--tRNA ligase (Aliivibrio fischeri (strain ATCC 700601 / ES114) (Vibrio fischeri)).